A 252-amino-acid polypeptide reads, in one-letter code: 5'-nucleotidase SurE (252 aa).

Positions 8, 9, 39, and 91 each coordinate a divalent metal cation.

It belongs to the SurE nucleotidase family. It depends on a divalent metal cation as a cofactor.

Its subcellular location is the cytoplasm. It carries out the reaction a ribonucleoside 5'-phosphate + H2O = a ribonucleoside + phosphate. Functionally, nucleotidase that shows phosphatase activity on nucleoside 5'-monophosphates. This chain is 5'-nucleotidase SurE, found in Legionella pneumophila (strain Lens).